A 479-amino-acid polypeptide reads, in one-letter code: MFRAALWPPVLLLLQLLLLACAPGGEGAHDQDEIRFLPGLAKQPSFRQYSGYLKGSGSKRLHYWFVESQKDPKSSPVVLWLNGGPGCSSLDGLLTEHGPFLIQPDGVTLEYNPYSWNLIANVLYLESPAGVGFSYSDDKSYATNDTEVAQSNFEALKDFFCLFPEYKGNELFLTGESYAGIYIPTLAVLVMQDPSMNLQGLAVGNGLSSYEQNDNSLVYFAYYHGLLGNRLWSSLQTHCCSQNQCNFHDNKEPECVANLQEVSHIVASSGLNIYNLYAPCAGGVPSHVRHEKDTVVVQDLGNIFTRLPLKRVWHQTLLRSGEKVHLDPPCTNTTAASNYLNDPHVRKALHIPEQLPRWDLCNFLVNIQYRRLYQSMCSQYLKLLSAQKYRILLYNGDVDMACNFMGDEWFVDSLNQKMEVQRRPWLVDYGESGEQIAGFVKEFSHIAFLTIKGAGHMVPTDKPQAALTMFSRFLNRQPY.

Positions M1 to G27 are cleaved as a signal peptide. 4 disulfides stabilise this stretch: C87/C361, C239/C255, C240/C245, and C280/C330. An N-linked (GlcNAc...) asparagine glycan is attached at N144. S177 is a catalytic residue. N-linked (GlcNAc...) asparagine glycosylation occurs at N332. Catalysis depends on residues D399 and H456.

The protein belongs to the peptidase S10 family. Heterodimer of a 32 kDa chain and a 20 kDa chain; disulfide-linked.

Its subcellular location is the lysosome. It carries out the reaction Release of a C-terminal amino acid with broad specificity.. Functionally, protective protein appears to be essential for both the activity of beta-galactosidase and neuraminidase, it associates with these enzymes and exerts a protective function necessary for their stability and activity. This protein is also a carboxypeptidase and can deamidate tachykinins. This chain is Lysosomal protective protein (CTSA), found in Bos taurus (Bovine).